We begin with the raw amino-acid sequence, 200 residues long: Signal peptidase complex catalytic subunit SEC11 (200 aa).

Residues 1–15 lie on the Cytoplasmic side of the membrane; it reads MFAELAPYLSNPRQT. The chain crosses the membrane as a helical; Signal-anchor for type II membrane protein span at residues 16-33; that stretch reads LAQILNFALVLSTAFMGW. Residues 34 to 200 lie on the Lumenal side of the membrane; it reads KALSVYTNSS…MGVMVMLQRE (167 aa). A glycan (N-linked (GlcNAc...) asparagine) is linked at N41. Residues S53 and H92 each act as charge relay system in the active site. The interval 101 to 131 is disordered; sequence GDGGKKSQRRLEKEADKRSGPGLSSPISHQM. The span at 103-119 shows a compositional bias: basic and acidic residues; sequence GGKKSQRRLEKEADKRS. D142 functions as the Charge relay system in the catalytic mechanism. The C-terminal short (CTS) helix stretch occupies residues 186 to 197; that stretch reads VLLGIMGVMVML.

The protein belongs to the peptidase S26B family. In terms of assembly, component of the signal peptidase complex (SPC) composed of a catalytic subunit SEC11 and three accessory subunits SPC1, SPC2 and SPC3. The complex induces a local thinning of the ER membrane which is used to measure the length of the signal peptide (SP) h-region of protein substrates. This ensures the selectivity of the complex towards h-regions shorter than 18-20 amino acids. SPC associates with the translocon complex.

Its subcellular location is the endoplasmic reticulum membrane. It carries out the reaction Cleavage of hydrophobic, N-terminal signal or leader sequences from secreted and periplasmic proteins.. Functionally, catalytic component of the signal peptidase complex (SPC) which catalyzes the cleavage of N-terminal signal sequences from nascent proteins as they are translocated into the lumen of the endoplasmic reticulum. Specifically cleaves N-terminal signal peptides that contain a hydrophobic alpha-helix (h-region) shorter than 18-20 amino acids. This chain is Signal peptidase complex catalytic subunit SEC11 (SEC11), found in Arthroderma gypseum (strain ATCC MYA-4604 / CBS 118893) (Microsporum gypseum).